The following is a 1001-amino-acid chain: Serine/threonine-protein kinase TAO1-B (1001 aa).

The Protein kinase domain occupies 28 to 281; it reads FSDLREIGHG…SDELLKHMFV (254 aa). Residues 34–42 and Lys-57 each bind ATP; that span reads IGHGSFGAV. Asp-151 (proton acceptor) is an active-site residue. 2 disordered regions span residues 324-435 and 567-586; these read PAVE…YRNR and KEEL…EWLS. Residues 350–370 show a composition bias toward low complexity; sequence SNQSIPSMSISASSQSSSVNS. Basic and acidic residues-rich tracts occupy residues 375–388 and 577–586; these read SDDK…EGDH and PKKEKQEWLS. Coiled coils occupy residues 458 to 651 and 754 to 877; these read SELR…EHAM and KAVL…EIEA. Residues 911–1001 are disordered; that stretch reads SHNPTGGPGP…ISNGSHMSYT (91 aa). Residues 921–930 are compositionally biased toward low complexity; that stretch reads HWGHPMAGPP. 2 stretches are compositionally biased toward polar residues: residues 949–967 and 975–1001; these read GSVQ…NSPQ and GGRT…MSYT.

Belongs to the protein kinase superfamily. STE Ser/Thr protein kinase family. STE20 subfamily.

It is found in the cytoplasm. It catalyses the reaction L-seryl-[protein] + ATP = O-phospho-L-seryl-[protein] + ADP + H(+). It carries out the reaction L-threonyl-[protein] + ATP = O-phospho-L-threonyl-[protein] + ADP + H(+). In terms of biological role, serine/threonine-protein kinase involved in various processes such as p38/mapk14 stress-activated MAPK cascade, DNA damage response and regulation of cytoskeleton stability. Acts as an activator of the p38/MAPK14 stress-activated MAPK cascade by mediating phosphorylation and subsequent activation of upstream MAP kinase kinases. In response to DNA damage, involved in the G2/M transition DNA damage checkpoint by activating the p38/MAPK14 stress-activated MAPK cascade. This chain is Serine/threonine-protein kinase TAO1-B (taok1-b), found in Xenopus laevis (African clawed frog).